Reading from the N-terminus, the 395-residue chain is Extracellular cysteine protease (395 aa).

An N-terminal signal peptide occupies residues 1-30 (MKKKLSYMITIMLAFTLSLALGLFFNSAHA). Residues 31–221 (DSLPQKNGAN…TLEYQSTRNE (191 aa)) constitute a propeptide that is removed on maturation. Catalysis depends on residues Cys-245, His-341, and Asn-362.

Belongs to the peptidase C47 family. Post-translationally, proteolytically cleaved.

Its subcellular location is the secreted. It is found in the cell wall. Functionally, cysteine protease able to cleave elastin, insulin, myoglobin, fibronectin, fibrinogen, HMW-kininogen, alpha-1-protease inhibitor and alpha-1-antitrypsin. Along with other extracellular proteases may contribute to the colonization and infection of human tissues. The chain is Extracellular cysteine protease (ecpA) from Staphylococcus epidermidis (strain ATCC 35984 / DSM 28319 / BCRC 17069 / CCUG 31568 / BM 3577 / RP62A).